We begin with the raw amino-acid sequence, 101 residues long: Protein translation factor SUI1 homolog (101 aa).

It belongs to the SUI1 family.

The protein is Protein translation factor SUI1 homolog of Aeropyrum pernix (strain ATCC 700893 / DSM 11879 / JCM 9820 / NBRC 100138 / K1).